The following is a 125-amino-acid chain: Small ribosomal subunit protein uS12m (125 aa).

It belongs to the universal ribosomal protein uS12 family. Component of the mitochondrial ribosome small subunit.

Its subcellular location is the mitochondrion. Functionally, protein S12 is involved in the translation initiation step. The sequence is that of Small ribosomal subunit protein uS12m (RPS12) from Arabidopsis thaliana (Mouse-ear cress).